The sequence spans 88 residues: MVRVDQNLFNEVMYLLDELSQDITVPKNVRKVAQDSKAKLSQENESLDLRCATVLSMLDEMANDPNVPAHGRTDLYTIISKLEALSKS.

It belongs to the UPF0147 family.

This is UPF0147 protein Ta0600 from Thermoplasma acidophilum (strain ATCC 25905 / DSM 1728 / JCM 9062 / NBRC 15155 / AMRC-C165).